The sequence spans 109 residues: Ribonuclease P protein component (109 aa).

The protein belongs to the RnpA family. As to quaternary structure, consists of a catalytic RNA component (M1 or rnpB) and a protein subunit.

It catalyses the reaction Endonucleolytic cleavage of RNA, removing 5'-extranucleotides from tRNA precursor.. RNaseP catalyzes the removal of the 5'-leader sequence from pre-tRNA to produce the mature 5'-terminus. It can also cleave other RNA substrates such as 4.5S RNA. The protein component plays an auxiliary but essential role in vivo by binding to the 5'-leader sequence and broadening the substrate specificity of the ribozyme. This is Ribonuclease P protein component from Nitratiruptor sp. (strain SB155-2).